The sequence spans 651 residues: Meiotic expression up-regulated protein 6 (651 aa).

Composition is skewed to basic and acidic residues over residues 1–12 (MSYEGREERPEQ) and 21–30 (VSEHNEHDSG). Residues 1–102 (MSYEGREERP…EKKSKKKAKD (102 aa)) are disordered. The span at 72 to 83 (TVDNIDPADDDP) shows a compositional bias: acidic residues. Positions 90–102 (KVEEKKSKKKAKD) are enriched in basic and acidic residues. The 68-residue stretch at 194 to 261 (CRGLLFYSKS…WITDLKNAIA (68 aa)) folds into the PH domain. Disordered stretches follow at residues 365–430 (TVEA…GTPI), 468–514 (VATP…KGGN), and 587–630 (TIKP…QMPQ). 2 stretches are compositionally biased toward polar residues: residues 410–429 (ESTS…NGTP) and 478–490 (PSTA…SVVS). Positions 497-514 (KKAGKKHHRHHKKKKGGN) are enriched in basic residues. A compositionally biased stretch (low complexity) spans 587–604 (TIKPETPLTPTTTPTPRT).

This Schizosaccharomyces pombe (strain 972 / ATCC 24843) (Fission yeast) protein is Meiotic expression up-regulated protein 6 (meu6).